A 169-amino-acid polypeptide reads, in one-letter code: Putative tRNA (cytidine(34)-2'-O)-methyltransferase (169 aa).

S-adenosyl-L-methionine contacts are provided by Val-79, Gly-104, Ile-125, and Ser-134.

The protein belongs to the class IV-like SAM-binding methyltransferase superfamily. RNA methyltransferase TrmH family. TrmL subfamily.

It localises to the cytoplasm. It carries out the reaction cytidine(34) in tRNA + S-adenosyl-L-methionine = 2'-O-methylcytidine(34) in tRNA + S-adenosyl-L-homocysteine + H(+). The enzyme catalyses 5-carboxymethylaminomethyluridine(34) in tRNA(Leu) + S-adenosyl-L-methionine = 5-carboxymethylaminomethyl-2'-O-methyluridine(34) in tRNA(Leu) + S-adenosyl-L-homocysteine + H(+). In terms of biological role, could methylate the ribose at the nucleotide 34 wobble position in tRNA. The polypeptide is Putative tRNA (cytidine(34)-2'-O)-methyltransferase (Lactococcus lactis subsp. cremoris (strain MG1363)).